A 481-amino-acid chain; its full sequence is Glutamyl-tRNA(Gln) amidotransferase subunit A (481 aa).

Residues Lys75 and Ser150 each act as charge relay system in the active site. The active-site Acyl-ester intermediate is the Ser174.

It belongs to the amidase family. GatA subfamily. In terms of assembly, heterotrimer of A, B and C subunits.

It catalyses the reaction L-glutamyl-tRNA(Gln) + L-glutamine + ATP + H2O = L-glutaminyl-tRNA(Gln) + L-glutamate + ADP + phosphate + H(+). Functionally, allows the formation of correctly charged Gln-tRNA(Gln) through the transamidation of misacylated Glu-tRNA(Gln) in organisms which lack glutaminyl-tRNA synthetase. The reaction takes place in the presence of glutamine and ATP through an activated gamma-phospho-Glu-tRNA(Gln). This Macrococcus caseolyticus (strain JCSC5402) (Macrococcoides caseolyticum) protein is Glutamyl-tRNA(Gln) amidotransferase subunit A.